Here is a 573-residue protein sequence, read N- to C-terminus: Urease subunit alpha 2 (573 aa).

Residues 136 to 573 (GAIDAHVHLI…LPMAQRYFLF (438 aa)) enclose the Urease domain. The Ni(2+) site is built by His141, His143, and Lys224. Lys224 is subject to N6-carboxylysine. His226 provides a ligand contact to substrate. Residues His253 and His279 each coordinate Ni(2+). The active-site Proton donor is His327. Asp367 is a Ni(2+) binding site.

This sequence belongs to the metallo-dependent hydrolases superfamily. Urease alpha subunit family. In terms of assembly, may form a heterohexamer of 3 UreC (alpha) and 3 UreAB (gamma/beta) subunits. May also form a heterotrimer of UreA (gamma), UreB (beta) and UreC (alpha) subunits. Three heterotrimers associate to form the active enzyme. Requires Ni cation as cofactor. In terms of processing, carboxylation allows a single lysine to coordinate two nickel ions.

It is found in the cytoplasm. It catalyses the reaction urea + 2 H2O + H(+) = hydrogencarbonate + 2 NH4(+). Its pathway is nitrogen metabolism; urea degradation; CO(2) and NH(3) from urea (urease route): step 1/1. In Streptomyces avermitilis (strain ATCC 31267 / DSM 46492 / JCM 5070 / NBRC 14893 / NCIMB 12804 / NRRL 8165 / MA-4680), this protein is Urease subunit alpha 2.